Reading from the N-terminus, the 315-residue chain is Methylglutaconyl-CoA hydratase, mitochondrial (315 aa).

The transit peptide at 1–43 (MAAAAAPGALGALSAGRVRLVAACCARLGSAAWARGTAPRRGY) directs the protein to the mitochondrion. Lysine 76 is subject to N6-acetyllysine; alternate. Lysine 76 is subject to N6-succinyllysine; alternate. The RNA-binding stretch occupies residues 81 to 95 (KNLLKMLSKAVDALK). Lysine 85 carries the post-translational modification N6-succinyllysine. 2 positions are modified to N6-acetyllysine; alternate: lysine 89 and lysine 120. Lysine 89 and lysine 120 each carry N6-succinyllysine; alternate. An N6-succinyllysine mark is found at lysine 124 and lysine 136. Lysine 180 and lysine 187 each carry N6-acetyllysine; alternate. Residues lysine 180 and lysine 187 each carry the N6-succinyllysine; alternate modification. Lysine 305 is subject to N6-succinyllysine.

This sequence belongs to the enoyl-CoA hydratase/isomerase family. Homohexamer.

The protein localises to the mitochondrion. It carries out the reaction (3S)-3-hydroxy-3-methylglutaryl-CoA = 3-methyl-(2E)-glutaconyl-CoA + H2O. It catalyses the reaction (3S)-citramalyl-CoA = itaconyl-CoA + H2O. The enzyme catalyses 3-hydroxyisovaleryl-CoA = 3-methylbut-2-enoyl-CoA + H2O. The catalysed reaction is (S)-3-hydroxyglutaryl-CoA = (2E)-glutaconyl-CoA + H2O. Its pathway is amino-acid degradation; L-leucine degradation; (S)-3-hydroxy-3-methylglutaryl-CoA from 3-isovaleryl-CoA: step 3/3. Functionally, catalyzes the fifth step in the leucine degradation pathway, the reversible hydration of 3-methylglutaconyl-CoA (3-MG-CoA) to 3-hydroxy-3-methylglutaryl-CoA (HMG-CoA). Can catalyze the reverse reaction but at a much lower rate in vitro. HMG-CoA is then quickly degraded by another enzyme (such as HMG-CoA lyase) to give acetyl-CoA and acetoacetate. Uses other substrates such as (2E)-glutaconyl-CoA efficiently in vitro, and to a lesser extent 3-methylcrotonyl-CoA (3-methyl-(2E)-butenoyl-CoA), crotonyl-CoA ((2E)-butenoyl-CoA) and 3-hydroxybutanoyl-CoA (the missing carboxylate reduces affinity to the active site). Originally it was identified as an RNA-binding protein as it binds to AU-rich elements (AREs) in vitro. AREs direct rapid RNA degradation and mRNA deadenylation. Might have itaconyl-CoA hydratase activity, converting itaconyl-CoA into citramalyl-CoA in the C5-dicarboxylate catabolism pathway. The C5-dicarboxylate catabolism pathway is required to detoxify itaconate, an antimicrobial metabolite and immunomodulator produced by macrophages during certain infections, that can act as a vitamin B12-poisoning metabolite. The chain is Methylglutaconyl-CoA hydratase, mitochondrial from Rattus norvegicus (Rat).